The chain runs to 241 residues: Platelet-derived growth factor subunit B (241 aa).

An N-terminal signal peptide occupies residues 1 to 20; it reads MNRCWALFLSLCCYLRLVSA. The propeptide at 21–81 is removed in mature form; sequence EGDPIPEELY…ELESLSRGRR (61 aa). Asparagine 63 carries N-linked (GlcNAc...) asparagine glycosylation. 3 disulfides stabilise this stretch: cysteine 97-cysteine 141, cysteine 130-cysteine 178, and cysteine 134-cysteine 180. Residues 191-241 constitute a propeptide, removed in mature form; it reads TPGSSQEQRAARTPQTRVTIRTVRVRRPPKGKHRKFKHTHDKTALKETLGA. Over residues 217–230 the composition is skewed to basic residues; it reads RPPKGKHRKFKHTH. Residues 217–241 form a disordered region; sequence RPPKGKHRKFKHTHDKTALKETLGA.

This sequence belongs to the PDGF/VEGF growth factor family. In terms of assembly, antiparallel homodimer; disulfide-linked. Antiparallel heterodimer with PDGFA; disulfide-linked. The PDGFB homodimer interacts with PDGFRA and PDGFRB homodimers, and with heterodimers formed by PDGFRA and PDGFRB. The heterodimer composed of PDGFA and PDGFB interacts with PDGFRB homodimers, and with heterodimers formed by PDGFRA and PDGFRB. Interacts with XLKD1. Interacts with LRP1. Interacts with SORL1 (via the N-terminal ectodomain). Interacts with CD82; this interaction inhibits PDGFB-mediated signaling pathway.

The protein resides in the secreted. Growth factor that plays an essential role in the regulation of embryonic development, cell proliferation, cell migration, survival and chemotaxis. Potent mitogen for cells of mesenchymal origin. Required for normal proliferation and recruitment of pericytes and vascular smooth muscle cells in the central nervous system, skin, lung, heart and placenta. Required for normal blood vessel development, and for normal development of kidney glomeruli. Plays an important role in wound healing. Signaling is modulated by the formation of heterodimers with PDGFA. This Ovis aries (Sheep) protein is Platelet-derived growth factor subunit B (PDGFB).